We begin with the raw amino-acid sequence, 130 residues long: Small ribosomal subunit protein uS9 (130 aa).

This sequence belongs to the universal ribosomal protein uS9 family.

The polypeptide is Small ribosomal subunit protein uS9 (Yersinia enterocolitica serotype O:8 / biotype 1B (strain NCTC 13174 / 8081)).